The chain runs to 353 residues: Quinolinate synthase (353 aa).

Residues histidine 47 and serine 68 each contribute to the iminosuccinate site. [4Fe-4S] cluster is bound at residue cysteine 113. Residues 139 to 141 and serine 156 contribute to the iminosuccinate site; that span reads YAN. Position 200 (cysteine 200) interacts with [4Fe-4S] cluster. Iminosuccinate contacts are provided by residues 226–228 and threonine 243; that span reads HPE. A [4Fe-4S] cluster-binding site is contributed by cysteine 297.

It belongs to the quinolinate synthase family. Type 1 subfamily. It depends on [4Fe-4S] cluster as a cofactor.

Its subcellular location is the cytoplasm. The enzyme catalyses iminosuccinate + dihydroxyacetone phosphate = quinolinate + phosphate + 2 H2O + H(+). It participates in cofactor biosynthesis; NAD(+) biosynthesis; quinolinate from iminoaspartate: step 1/1. Its function is as follows. Catalyzes the condensation of iminoaspartate with dihydroxyacetone phosphate to form quinolinate. The polypeptide is Quinolinate synthase (Serratia proteamaculans (strain 568)).